The sequence spans 201 residues: Endoribonuclease YbeY (201 aa).

3 residues coordinate Zn(2+): His156, His160, and His166.

It belongs to the endoribonuclease YbeY family. Zn(2+) serves as cofactor.

It localises to the cytoplasm. Single strand-specific metallo-endoribonuclease involved in late-stage 70S ribosome quality control and in maturation of the 3' terminus of the 16S rRNA. The protein is Endoribonuclease YbeY of Cupriavidus pinatubonensis (strain JMP 134 / LMG 1197) (Cupriavidus necator (strain JMP 134)).